The following is a 98-amino-acid chain: NADH-ubiquinone oxidoreductase chain 4L (98 aa).

The next 3 membrane-spanning stretches (helical) occupy residues 1–21, 29–49, and 61–81; these read MSLVHMNIGLAFTVAFLGLLM, SLLCLEGMMLTLFIMSSIMVL, and IILLVFAACEAAVGLSLLVMV.

It belongs to the complex I subunit 4L family. In terms of assembly, core subunit of respiratory chain NADH dehydrogenase (Complex I) which is composed of 45 different subunits.

The protein localises to the mitochondrion inner membrane. The catalysed reaction is a ubiquinone + NADH + 5 H(+)(in) = a ubiquinol + NAD(+) + 4 H(+)(out). Its function is as follows. Core subunit of the mitochondrial membrane respiratory chain NADH dehydrogenase (Complex I) which catalyzes electron transfer from NADH through the respiratory chain, using ubiquinone as an electron acceptor. Part of the enzyme membrane arm which is embedded in the lipid bilayer and involved in proton translocation. In Pseudosoriculus fumidus (Taiwanese brown-toothed shrew), this protein is NADH-ubiquinone oxidoreductase chain 4L (MT-ND4L).